Reading from the N-terminus, the 333-residue chain is O-acetyl transferase (333 aa).

It belongs to the acyltransferase 3 family.

The protein resides in the host cell inner membrane. Its function is as follows. Antigenically converts S.flexneri serotype X to 3a, Y to 3b, 1a to 1b and 4a to 4b by O-acetylating the O-antigenic polysaccharide chain. This chain is O-acetyl transferase (OAC), found in Shigella flexneri (Shigella flexneri bacteriophage VI).